We begin with the raw amino-acid sequence, 249 residues long: MAPSRKFFVGGNWKMNGRKQNLGELIGTLNAAKVPADTEVVCAPPTAYIDFARQKLDPKIAVAAQNCYKVTNGAFTGEISPGMIKDCGATWVVLGHSERRHVFGESDELIGQKVAHALAEGLGVIACIGEKLDEREAGITEKVVFEQTKVIADNVKDWSKVVLAYEPVWAIGTGKTATPQQAQEVHEKLRGWLKSNVSEAVAQSTRIIYGGSVTGATCKELASQPDVDGFLVGGASLKPEFVDIINAKQ.

Substrate contacts are provided by Asn12 and Lys14. Lys14 carries the N6-acetyllysine modification. A 3'-nitrotyrosine modification is found at Tyr68. A Phosphoserine modification is found at Ser80. The active-site Electrophile is the His96. Residue Ser106 is modified to Phosphoserine. Residue Lys142 forms a Glycyl lysine isopeptide (Lys-Gly) (interchain with G-Cter in SUMO1) linkage. Lys149 bears the N6-succinyllysine mark. Lys156 is modified (N6-acetyllysine; alternate). Lys156 carries the post-translational modification N6-succinyllysine; alternate. The residue at position 159 (Ser159) is a Phosphoserine. Catalysis depends on Glu166, which acts as the Proton acceptor. Thr173 bears the Phosphothreonine mark. The residue at position 194 (Lys194) is an N6-acetyllysine; alternate. The residue at position 194 (Lys194) is an N6-succinyllysine; alternate. The residue at position 194 (Lys194) is an N6-methyllysine; alternate. Position 198 is a phosphoserine (Ser198). Tyr209 bears the 3'-nitrotyrosine mark. Ser212 carries the phosphoserine modification. The residue at position 214 (Thr214) is a Phosphothreonine. Ser223 carries the post-translational modification Phosphoserine. Residue Lys238 is modified to N6-acetyllysine.

Belongs to the triosephosphate isomerase family. Homodimer.

The protein resides in the cytoplasm. It carries out the reaction dihydroxyacetone phosphate = methylglyoxal + phosphate. The catalysed reaction is D-glyceraldehyde 3-phosphate = dihydroxyacetone phosphate. It functions in the pathway carbohydrate degradation; glycolysis; D-glyceraldehyde 3-phosphate from glycerone phosphate: step 1/1. It participates in carbohydrate biosynthesis; gluconeogenesis. Functionally, triosephosphate isomerase is an extremely efficient metabolic enzyme that catalyzes the interconversion between dihydroxyacetone phosphate (DHAP) and D-glyceraldehyde-3-phosphate (G3P) in glycolysis and gluconeogenesis. It is also responsible for the non-negligible production of methylglyoxal a reactive cytotoxic side-product that modifies and can alter proteins, DNA and lipids. This Macaca fascicularis (Crab-eating macaque) protein is Triosephosphate isomerase (TPI1).